The chain runs to 271 residues: Glutamate racemase (271 aa).

Residues 10 to 11 (DS) and 42 to 43 (YG) contribute to the substrate site. The Proton donor/acceptor role is filled by Cys-73. Substrate is bound at residue 74-75 (NT). Cys-183 functions as the Proton donor/acceptor in the catalytic mechanism. 184–185 (TH) serves as a coordination point for substrate.

This sequence belongs to the aspartate/glutamate racemases family.

The catalysed reaction is L-glutamate = D-glutamate. It functions in the pathway cell wall biogenesis; peptidoglycan biosynthesis. Its function is as follows. Provides the (R)-glutamate required for cell wall biosynthesis. The protein is Glutamate racemase of Lactococcus lactis subsp. cremoris (strain MG1363).